The following is a 166-amino-acid chain: Crossover junction endodeoxyribonuclease RuvC (166 aa).

Active-site residues include Asp7, Glu68, and Asp141. Mg(2+) is bound by residues Asp7, Glu68, and Asp141.

Belongs to the RuvC family. In terms of assembly, homodimer which binds Holliday junction (HJ) DNA. The HJ becomes 2-fold symmetrical on binding to RuvC with unstacked arms; it has a different conformation from HJ DNA in complex with RuvA. In the full resolvosome a probable DNA-RuvA(4)-RuvB(12)-RuvC(2) complex forms which resolves the HJ. The cofactor is Mg(2+).

Its subcellular location is the cytoplasm. The catalysed reaction is Endonucleolytic cleavage at a junction such as a reciprocal single-stranded crossover between two homologous DNA duplexes (Holliday junction).. In terms of biological role, the RuvA-RuvB-RuvC complex processes Holliday junction (HJ) DNA during genetic recombination and DNA repair. Endonuclease that resolves HJ intermediates. Cleaves cruciform DNA by making single-stranded nicks across the HJ at symmetrical positions within the homologous arms, yielding a 5'-phosphate and a 3'-hydroxyl group; requires a central core of homology in the junction. The consensus cleavage sequence is 5'-(A/T)TT(C/G)-3'. Cleavage occurs on the 3'-side of the TT dinucleotide at the point of strand exchange. HJ branch migration catalyzed by RuvA-RuvB allows RuvC to scan DNA until it finds its consensus sequence, where it cleaves and resolves the cruciform DNA. The chain is Crossover junction endodeoxyribonuclease RuvC from Koribacter versatilis (strain Ellin345).